A 78-amino-acid chain; its full sequence is uncharacterized protein (78 aa).

A run of 2 helical transmembrane segments spans residues 13-35 (AGVG…PTGI) and 50-72 (GTTF…FYYF).

It is found in the cell membrane. This is an uncharacterized protein from Pasteurella multocida (strain Pm70).